Consider the following 304-residue polypeptide: Oxidoreductase calM (304 aa).

NADP(+)-binding residues include I26, T45, D68, and N98. S152 acts as the Proton donor in catalysis. NADP(+)-binding residues include Y166, K170, V200, and T202. Y166 acts as the Proton acceptor in catalysis. The Lowers pKa of active site Tyr role is filled by K170.

It belongs to the short-chain dehydrogenases/reductases (SDR) family.

Its pathway is secondary metabolite biosynthesis. Oxidoreductase; part of the gene cluster that mediates the biosynthesis of calbistrin A and related compounds. Calbistrin A is a secondary metabolite with an interesting structure that was recently found to have bioactivity against leukemia cells. It consists of two polyketides linked by an ester bond: a bicyclic decalin containing polyketide and a linear 12 carbon dioic acid structure. The polyketide synthase calA is probably responsible for forming the decalin moiety. Because calA lacks a designated enoylreductase (ER) domain, the required activity is provided by the trans-enoyl reductase calK. Following release from the PKS, calF then probably catalyzes the oxidation and the subsequent Diels Alder cycloisomerization that lead to the formation of the decalin moiety. The decalin polyketide backbone includes two C-methyl groups, at C7 and C11 in backbone, of which the C7 position is probably methylated by the methyltransferase domain of calA. A candidate for adding the methyl group at C11, if not done by CalA, is the cluster methyltransferase calH. Several additional tailoring enzymes within the cluster could be involved in the modification of the decalin polyketide product. Those include the 3 cytochrome P450 monooxygenases CalE, CalG and CalL, of which one might be responsible for the introduction of the extra hydroxyl group attached to the backbone of the decalin moiety, at position C9 in the backbone, that allows for attachment of the linear moiety. One tailoring enzyme activity that is expected to be involved in biosynthesis of calbistrin is an acyltransferase for connecting the two polyketide synthase products, and which could be performed by the cluster acyltransferase calJ. The enzyme responsible for the biosynthesis of the linear moiety, probably a second PKS, has not been identified yet. The polypeptide is Oxidoreductase calM (Penicillium decumbens).